The primary structure comprises 367 residues: MKFIIEREQLLKPLQQVSGPLGGRPTLPILGNLLLKVTENTLSLTGTDLEMEMMARVSLSQSHEIGATTVPARKFFDIWRGLPEGAEISVELDGDRLLVRSGRSRFSLSTLPASDFPNLDDWQSEVEFTLPQATLKRLIESTQFSMAHQDVRYYLNGMLFETENTELRTVATDGHRLAVCAMDIGQSLPGHSVIVPRKGVIELMRLLDGSGESLLQLQIGSNNLRAHVGDFIFTSKLVDGRFPDYRRVLPKNPTKTVIAGCDILKQAFSRAAILSNEKFRGVRINLTNGQLKITANNPEQEEAEEIVDVQYQGEEMEIGFNVSYLLDVLNTLKCEEVKLLLTDAVSSVQVENVASAAAAYVVMPMRL.

It belongs to the beta sliding clamp family. As to quaternary structure, forms a ring-shaped head-to-tail homodimer around DNA which binds and tethers DNA polymerases and other proteins to the DNA. The DNA replisome complex has a single clamp-loading complex (3 tau and 1 each of delta, delta', psi and chi subunits) which binds 3 Pol III cores (1 core on the leading strand and 2 on the lagging strand) each with a beta sliding clamp dimer. Additional proteins in the replisome are other copies of gamma, psi and chi, Ssb, DNA helicase and RNA primase.

The protein localises to the cytoplasm. Confers DNA tethering and processivity to DNA polymerases and other proteins. Acts as a clamp, forming a ring around DNA (a reaction catalyzed by the clamp-loading complex) which diffuses in an ATP-independent manner freely and bidirectionally along dsDNA. Initially characterized for its ability to contact the catalytic subunit of DNA polymerase III (Pol III), a complex, multichain enzyme responsible for most of the replicative synthesis in bacteria; Pol III exhibits 3'-5' exonuclease proofreading activity. The beta chain is required for initiation of replication as well as for processivity of DNA replication. The polypeptide is Beta sliding clamp (dnaN) (Proteus mirabilis).